Here is a 567-residue protein sequence, read N- to C-terminus: Urease subunit alpha (567 aa).

The region spanning 129-567 (GGIDTHIHWI…LPMAQRYFLF (439 aa)) is the Urease domain. 3 residues coordinate Ni(2+): H134, H136, and K217. Residue K217 is modified to N6-carboxylysine. H219 provides a ligand contact to substrate. Positions 246 and 272 each coordinate Ni(2+). The active-site Proton donor is the H320. D360 provides a ligand contact to Ni(2+).

Belongs to the metallo-dependent hydrolases superfamily. Urease alpha subunit family. As to quaternary structure, heterotrimer of UreA (gamma), UreB (beta) and UreC (alpha) subunits. Three heterotrimers associate to form the active enzyme. Ni cation serves as cofactor. In terms of processing, carboxylation allows a single lysine to coordinate two nickel ions.

It is found in the cytoplasm. It catalyses the reaction urea + 2 H2O + H(+) = hydrogencarbonate + 2 NH4(+). It participates in nitrogen metabolism; urea degradation; CO(2) and NH(3) from urea (urease route): step 1/1. This is Urease subunit alpha from Klebsiella pneumoniae (strain 342).